The sequence spans 781 residues: Coiled-coil and C2 domain-containing protein 1-like (781 aa).

Disordered stretches follow at residues 32–63 (MGRVSRPAAPARGAPPAARGRPAPAAPANVPG), 94–134 (ELNG…APNS), 187–296 (ESEI…AKES), 313–373 (CSAD…TEGN), and 403–447 (GELP…VEGK). Positions 37–59 (RPAAPARGAPPAARGRPAPAAPA) are enriched in low complexity. A compositionally biased stretch (gly residues) spans 98–107 (LVGGGGGGGA). A compositionally biased stretch (low complexity) spans 108–118 (APTVPTRAAPR). Pro residues-rich tracts occupy residues 119–129 (APGPSGPPPSA) and 204–222 (PLPPPAPTAQPAHHPPAPP). Over residues 244-256 (APAPTAAAPPATK) the composition is skewed to low complexity. Basic residues predominate over residues 269–280 (ILHHRRDLHKQN). The segment covering 285-296 (IADKDKESAKES) has biased composition (basic and acidic residues). Pro residues predominate over residues 324–341 (PPSPPPYRKPAPPQPQAP). A compositionally biased stretch (basic and acidic residues) spans 363 to 373 (KMAEKAKTEGN). The C2 domain maps to 605–741 (YEMRQIPSAD…EHSAEMEESL (137 aa)).

The protein belongs to the CC2D1 family.

The chain is Coiled-coil and C2 domain-containing protein 1-like from Caenorhabditis elegans.